Here is a 726-residue protein sequence, read N- to C-terminus: Dipeptidyl-peptidase 5 (726 aa).

An N-terminal signal peptide occupies residues M1–A19. N96 and N252 each carry an N-linked (GlcNAc...) asparagine glycan. The segment at A269–P291 is disordered. Catalysis depends on S558, which acts as the Charge relay system. A glycan (N-linked (GlcNAc...) asparagine) is linked at N605. Catalysis depends on charge relay system residues D641 and H673. Residue N699 is glycosylated (N-linked (GlcNAc...) asparagine).

This sequence belongs to the peptidase S9C family.

The protein localises to the secreted. Functionally, extracellular dipeptidyl-peptidase which removes N-terminal dipeptides sequentially from polypeptides having unsubstituted N-termini. Contributes to pathogenicity. In Trichophyton equinum (Horse ringworm fungus), this protein is Dipeptidyl-peptidase 5 (DPP5).